A 267-amino-acid chain; its full sequence is Indole-3-glycerol phosphate synthase (267 aa).

Belongs to the TrpC family.

The enzyme catalyses 1-(2-carboxyphenylamino)-1-deoxy-D-ribulose 5-phosphate + H(+) = (1S,2R)-1-C-(indol-3-yl)glycerol 3-phosphate + CO2 + H2O. It participates in amino-acid biosynthesis; L-tryptophan biosynthesis; L-tryptophan from chorismate: step 4/5. The chain is Indole-3-glycerol phosphate synthase from Dichelobacter nodosus (strain VCS1703A).